A 574-amino-acid chain; its full sequence is ATP-dependent RNA helicase RhlB (574 aa).

A Q motif motif is present at residues 9 to 37 (VTFSSFDLHPALVAGLESAGFTRCTPIQA). In terms of domain architecture, Helicase ATP-binding spans 40–220 (LPVALPGGDV…YEHMNEPEKL (181 aa)). Residue 53–60 (AQTGTGKT) coordinates ATP. Positions 166–169 (DEAD) match the DEAD box motif. The 163-residue stretch at 231-393 (RVRQRIYFPS…PVTSELLTPL (163 aa)) folds into the Helicase C-terminal domain. Positions 423–432 (EQRAAEEQRR) are enriched in basic and acidic residues. The disordered stretch occupies residues 423-574 (EQRAAEEQRR…RRLRSLVSGN (152 aa)). Residues 435–449 (GRSGPGGGSRSGSGG) are compositionally biased toward gly residues. Positions 477–495 (AAAAQTEKPVVAAAAAQAP) are enriched in low complexity. A compositionally biased stretch (basic residues) spans 506 to 515 (PRKRRRRRNG). 2 stretches are compositionally biased toward low complexity: residues 523–535 (PAVA…APAA) and 553–562 (SSGSPSLLGR).

Belongs to the DEAD box helicase family. RhlB subfamily. As to quaternary structure, component of the RNA degradosome, which is a multiprotein complex involved in RNA processing and mRNA degradation.

The protein localises to the cytoplasm. It carries out the reaction ATP + H2O = ADP + phosphate + H(+). DEAD-box RNA helicase involved in RNA degradation. Has RNA-dependent ATPase activity and unwinds double-stranded RNA. The polypeptide is ATP-dependent RNA helicase RhlB (Xanthomonas oryzae pv. oryzae (strain KACC10331 / KXO85)).